The sequence spans 1553 residues: Sodium channel protein PaFPC1 (1553 aa).

The tract at residues 1 to 68 (MADNSPLIRE…SAHPDQALEQ (68 aa)) is disordered. Residues 1–140 (MADNSPLIRE…RVAISTMVQP (140 aa)) lie on the Cytoplasmic side of the membrane. The segment covering 34–60 (ENGKTEENKDNSRDKGRGANKDRDGSA) has biased composition (basic and acidic residues). The chain crosses the membrane as a helical span at residues 141 to 159 (IFSYFIMITILIHCIFMIM). Topologically, residues 160–165 (PATQTT) are extracellular. Residues 166–186 (YILELVFLSIYTIEVVVKVLA) traverse the membrane as a helical segment. Topologically, residues 187-200 (RGFILHPFAYLRDP) are cytoplasmic. The helical transmembrane segment at 201–218 (WNWLDFLVTLIGYITLVV) threads the bilayer. Residues 219-224 (DLGHLY) are Extracellular-facing. The helical transmembrane segment at 225 to 241 (ALRAFRVLRSWRTVTIV) threads the bilayer. Over 242–260 (PGWRTIVDALSLSITSLKD) the chain is Cytoplasmic. The chain crosses the membrane as a helical span at residues 261-280 (LVLLLLFSLFVFAVLGLQIY). Topologically, residues 281–360 (MGVLTQKCVK…PNYGYTSFDT (80 aa)) are extracellular. Intrachain disulfides connect Cys-288/Cys-337 and Cys-328/Cys-343. N-linked (GlcNAc...) asparagine glycosylation is found at Asn-300, Asn-308, Asn-312, and Asn-330. An intramembrane region (pore-forming) is located at residues 361–385 (FGWAFLSVFRLVTLDYWEDLYQLAL). Glu-378 provides a ligand contact to saxitoxin. Residues 386 to 392 (RSAGPWH) are Extracellular-facing. A helical membrane pass occupies residues 393–413 (ILFFIIVVFYGTFCFLNFILA). At 414-519 (VVVMSYTHMV…GAIGAVVLSP (106 aa)) the chain is on the cytoplasmic side. The helical transmembrane segment at 520 to 538 (FFELFIAVIIVLNITFMAL) threads the bilayer. Over 539-549 (DHHDMNIEFER) the chain is Extracellular. The helical transmembrane segment at 550-569 (ILRTGNYIFTSIYIVEAVLK) threads the bilayer. Over 570–583 (IIALSPKFYFKDSW) the chain is Cytoplasmic. A helical transmembrane segment spans residues 584–603 (NVFDFIIVVFAILELGLEGV). Residues 604–605 (QG) are Extracellular-facing. Residues 606-623 (LSVFRSFRLLRVFRLAKF) form a helical membrane-spanning segment. Topologically, residues 624 to 639 (WPTLNNFMSVMTKSYG) are cytoplasmic. A helical membrane pass occupies residues 640–658 (AFVNVMYVMFLLLFIFAII). Over 659-686 (GMQLFGMNYIDNMERFPDGDLPRWNFTD) the chain is Extracellular. Asn-683 is a glycosylation site (N-linked (GlcNAc...) asparagine). The segment at residues 687-707 (FLHSFMIVFRALCGEWIESMW) is an intramembrane region (pore-forming). Tetrodotoxin is bound by residues Glu-701 and Glu-704. A saxitoxin-binding site is contributed by Glu-704. Residues 708–719 (DCMLVGDWSCIP) are Extracellular-facing. The cysteines at positions 709 and 717 are disulfide-linked. The helical transmembrane segment at 720 to 740 (FFVAVFFVGNLVILNLLIALL) threads the bilayer. At 741–857 (LNNYGSFCTS…VCFLLAKNKY (117 aa)) the chain is on the cytoplasmic side. Residues 858-875 (FQKFVTAVLVITSVLLAL) form a helical membrane-spanning segment. Over 876-888 (EDIYLPQRPVLVN) the chain is Extracellular. The chain crosses the membrane as a helical span at residues 889–907 (ITLYVDYVLTAFFVIEMII). Residues 908–921 (MLFAVGFKKYFTSK) lie on the Cytoplasmic side of the membrane. A helical membrane pass occupies residues 922–940 (WYWLDFIVVVAYLLNFVLM). Residues 941-945 (CAGIE) are Extracellular-facing. A helical transmembrane segment spans residues 946 to 964 (ALQTLRLLRVFRLFRPLSK). At 965–981 (VNGMQVVTSTLVEAVPH) the chain is on the cytoplasmic side. A helical transmembrane segment spans residues 982–1001 (IFNVILVGIFFWLVFAIMGV). At 1002–1047 (QLFAGKFYKCVDENSTVLSHEITMDRNDCLHENYTWENSPMNFDHV) the chain is on the extracellular side. Cysteines 1011 and 1030 form a disulfide. Asn-1015 is a glycosylation site (N-linked (GlcNAc...) asparagine). Residue Asn-1028 is glycosylated (N-linked (GlcNAc...) asparagine; atypical). Asn-1034 is a glycosylation site (N-linked (GlcNAc...) asparagine). The pore-forming intramembrane region spans 1048-1069 (GNAYLSLLQVATFKGWLQIMND). Gly-1062 is a binding site for tetrodotoxin. Trp-1063 contributes to the saxitoxin binding site. Topologically, residues 1070–1086 (AIDSREVHKQPIRETNI) are extracellular. The chain crosses the membrane as a helical span at residues 1087–1108 (YMYLYFIFFIVFGSFFILKLFV). Over 1109–1171 (CILIDIFRQQ…LMYDISVNRK (63 aa)) the chain is Cytoplasmic. The interval 1133–1146 (QLIYRRAVMRTMSA) is linker region that may regulate channel inactivation. The helical transmembrane segment at 1172 to 1189 (FEYTMMILIILNVAVMAI) threads the bilayer. The Extracellular portion of the chain corresponds to 1190–1200 (DHYGQSMEFSE). A helical membrane pass occupies residues 1201 to 1219 (VLDYLNLIFIIIFFVECVI). Residues 1220–1231 (KVSGLRHHYFKD) are Cytoplasmic-facing. The helical transmembrane segment at 1232–1249 (PWNIIDFLYVVLAIAGLM) threads the bilayer. At 1250-1262 (LSDVIEKYFISPT) the chain is on the extracellular side. Residues 1263–1279 (LLRILRILRVGRLLRYF) traverse the membrane as a helical segment. The Cytoplasmic segment spans residues 1280-1298 (QSARGMRLLLLALRKALRT). The chain crosses the membrane as a helical span at residues 1299 to 1316 (LFNVSFLLFVIMFVYAVF). Topologically, residues 1317–1338 (GMEFFMHIRDAGAIDDVYNFKT) are extracellular. An intramembrane region (pore-forming) is located at residues 1339-1361 (FGQSIILLFQLATSAGWDGVYFA). Tetrodotoxin contacts are provided by Gly-1354 and Asp-1356. Residue Asp-1356 participates in saxitoxin binding. The Extracellular portion of the chain corresponds to 1362-1387 (IANEEDCRAPDHELGYPGNCGSRALG). A disulfide bridge connects residues Cys-1368 and Cys-1381. The helical transmembrane segment at 1388–1410 (IAYLVSYLIITCLVVINMYAAVI) threads the bilayer. The Cytoplasmic portion of the chain corresponds to 1411-1553 (LDYVLEVYED…NAWRKHKQQN (143 aa)).

It belongs to the sodium channel (TC 1.A.1.10) family. As to expression, detected in adult nerve cord, muscle, gut and mushroom-shaped accessory glands.

The protein resides in the cell membrane. With respect to regulation, inhibited by the pore blockers saxitoxin and tetrodotoxin. Its function is as follows. Mediates the voltage-dependent sodium ion permeability of excitable membranes. The polypeptide is Sodium channel protein PaFPC1 (Periplaneta americana (American cockroach)).